Reading from the N-terminus, the 421-residue chain is Growth arrest-specific protein 7 (421 aa).

Residues 1–117 (MATALQKPGM…SPGRKQSKEN (117 aa)) are disordered. A WW domain is found at 22-55 (VILPPGWHSYLSPQGRRYYVNTTTNETTWERPSS). A compositionally biased stretch (polar residues) spans 41 to 52 (VNTTTNETTWER). Over residues 53–65 (PSSSPGISASPAP) the composition is skewed to low complexity. Phosphoserine occurs at positions 62 and 108. Residues 95 to 117 (RKSTGDSQNLGSSSPGRKQSKEN) show a composition bias toward polar residues. The region spanning 141–401 (TEWSYCDYFW…LLRKVDPAKD (261 aa)) is the F-BAR domain. Positions 254 to 328 (ENFKKDMKKC…RKSTQAGDDL (75 aa)) form a coiled coil.

As to expression, expressed abundantly in brain with lower levels in heart and testis. In the brain, expressed prominently in the Purkinje layer of the cerebellum, moderately in hippocampus, and less extensively in cerebral cortex and caudate putamen.

It localises to the cytoplasm. Its function is as follows. May play a role in promoting maturation and morphological differentiation of cerebellar neurons. The chain is Growth arrest-specific protein 7 (Gas7) from Mus musculus (Mouse).